The sequence spans 198 residues: Na(+)-translocating NADH-quinone reductase subunit E (198 aa).

6 helical membrane passes run 11–31 (SIFI…FLAV), 39–59 (MGLG…NNLI), 77–97 (FLSF…LEMA), 110–130 (GIFL…SFMV), 140–160 (VVYG…MAGI), and 176–196 (LGIT…FSGI).

The protein belongs to the NqrDE/RnfAE family. In terms of assembly, composed of six subunits; NqrA, NqrB, NqrC, NqrD, NqrE and NqrF.

The protein localises to the cell inner membrane. The enzyme catalyses a ubiquinone + n Na(+)(in) + NADH + H(+) = a ubiquinol + n Na(+)(out) + NAD(+). In terms of biological role, NQR complex catalyzes the reduction of ubiquinone-1 to ubiquinol by two successive reactions, coupled with the transport of Na(+) ions from the cytoplasm to the periplasm. NqrA to NqrE are probably involved in the second step, the conversion of ubisemiquinone to ubiquinol. The polypeptide is Na(+)-translocating NADH-quinone reductase subunit E (Aeromonas hydrophila subsp. hydrophila (strain ATCC 7966 / DSM 30187 / BCRC 13018 / CCUG 14551 / JCM 1027 / KCTC 2358 / NCIMB 9240 / NCTC 8049)).